The primary structure comprises 142 residues: Putative pre-16S rRNA nuclease (142 aa).

Belongs to the YqgF nuclease family.

It localises to the cytoplasm. Functionally, could be a nuclease involved in processing of the 5'-end of pre-16S rRNA. This Staphylococcus haemolyticus (strain JCSC1435) protein is Putative pre-16S rRNA nuclease.